Here is a 572-residue protein sequence, read N- to C-terminus: Proline--tRNA ligase (572 aa).

This sequence belongs to the class-II aminoacyl-tRNA synthetase family. ProS type 1 subfamily. Homodimer.

It is found in the cytoplasm. It catalyses the reaction tRNA(Pro) + L-proline + ATP = L-prolyl-tRNA(Pro) + AMP + diphosphate. Functionally, catalyzes the attachment of proline to tRNA(Pro) in a two-step reaction: proline is first activated by ATP to form Pro-AMP and then transferred to the acceptor end of tRNA(Pro). As ProRS can inadvertently accommodate and process non-cognate amino acids such as alanine and cysteine, to avoid such errors it has two additional distinct editing activities against alanine. One activity is designated as 'pretransfer' editing and involves the tRNA(Pro)-independent hydrolysis of activated Ala-AMP. The other activity is designated 'posttransfer' editing and involves deacylation of mischarged Ala-tRNA(Pro). The misacylated Cys-tRNA(Pro) is not edited by ProRS. In Cronobacter sakazakii (strain ATCC BAA-894) (Enterobacter sakazakii), this protein is Proline--tRNA ligase.